A 291-amino-acid chain; its full sequence is Phosphatidylglycerol--prolipoprotein diacylglyceryl transferase (291 aa).

A run of 7 helical transmembrane segments spans residues 21–41, 60–80, 96–116, 130–150, 198–218, 225–245, and 260–280; these read VALHWYGLMYLVGFVFAMWLA, LLYAGFLGVFLGGRIGYVLFY, WDGGMSFHGGLIGVILVMIIF, FIAPLIPFGLGAGRLGNFING, SQLYELALEGVVLFIILNLFI, GAVSGLFLIGYGAFRIIVEFF, and ISMGQILSIPMIIAGAIMMVW. Arginine 143 contacts a 1,2-diacyl-sn-glycero-3-phospho-(1'-sn-glycerol).

This sequence belongs to the Lgt family.

It is found in the cell inner membrane. It catalyses the reaction L-cysteinyl-[prolipoprotein] + a 1,2-diacyl-sn-glycero-3-phospho-(1'-sn-glycerol) = an S-1,2-diacyl-sn-glyceryl-L-cysteinyl-[prolipoprotein] + sn-glycerol 1-phosphate + H(+). It participates in protein modification; lipoprotein biosynthesis (diacylglyceryl transfer). Functionally, catalyzes the transfer of the diacylglyceryl group from phosphatidylglycerol to the sulfhydryl group of the N-terminal cysteine of a prolipoprotein, the first step in the formation of mature lipoproteins. In Salmonella newport (strain SL254), this protein is Phosphatidylglycerol--prolipoprotein diacylglyceryl transferase.